The primary structure comprises 161 residues: Small ribosomal subunit protein eS6 (161 aa).

The interval 119–161 (VLLGEEEPEDADDDGDSDVDADEATDTDAGSEEDNDDDIADAE) is disordered. Over residues 122–161 (GEEEPEDADDDGDSDVDADEATDTDAGSEEDNDDDIADAE) the composition is skewed to acidic residues.

This sequence belongs to the eukaryotic ribosomal protein eS6 family.

This chain is Small ribosomal subunit protein eS6, found in Haloquadratum walsbyi (strain DSM 16790 / HBSQ001).